Reading from the N-terminus, the 108-residue chain is Large ribosomal subunit protein bL31B (108 aa).

The segment at 81–108 (KPAQPVQAPAEEGPVVKGKKKAPAKKKK) is disordered. The span at 97-108 (KGKKKAPAKKKK) shows a compositional bias: basic residues.

The protein belongs to the bacterial ribosomal protein bL31 family. Type B subfamily. As to quaternary structure, part of the 50S ribosomal subunit.

The polypeptide is Large ribosomal subunit protein bL31B (Chlamydia caviae (strain ATCC VR-813 / DSM 19441 / 03DC25 / GPIC) (Chlamydophila caviae)).